Reading from the N-terminus, the 97-residue chain is Sperm-associated acrosin inhibitor (97 aa).

Positions 1–26 (MAFFSSRVRALFILVLVLPLCSETGF) are cleaved as a signal peptide. Residues 32–90 (TRKEPDCDVYRSHLFFCTREMDPICGTNGKSYANPCIFCSEKLGRNEKFDFGHWGHCRE) enclose the Kazal-like domain. Disulfide bonds link C38–C70, C48–C67, and C56–C88.

As to expression, seminal plasma.

The protein resides in the secreted. In terms of biological role, inhibits acrosin. The polypeptide is Sperm-associated acrosin inhibitor (Sus scrofa (Pig)).